The sequence spans 632 residues: 1-deoxy-D-xylulose-5-phosphate synthase (632 aa).

Residues His-74 and 115–117 (AHS) contribute to the thiamine diphosphate site. Asp-146 contacts Mg(2+). Thiamine diphosphate-binding positions include 147–148 (GA), Asn-176, Tyr-283, and Glu-365. Position 176 (Asn-176) interacts with Mg(2+).

The protein belongs to the transketolase family. DXPS subfamily. In terms of assembly, homodimer. Mg(2+) is required as a cofactor. It depends on thiamine diphosphate as a cofactor.

It carries out the reaction D-glyceraldehyde 3-phosphate + pyruvate + H(+) = 1-deoxy-D-xylulose 5-phosphate + CO2. The protein operates within metabolic intermediate biosynthesis; 1-deoxy-D-xylulose 5-phosphate biosynthesis; 1-deoxy-D-xylulose 5-phosphate from D-glyceraldehyde 3-phosphate and pyruvate: step 1/1. Catalyzes the acyloin condensation reaction between C atoms 2 and 3 of pyruvate and glyceraldehyde 3-phosphate to yield 1-deoxy-D-xylulose-5-phosphate (DXP). This chain is 1-deoxy-D-xylulose-5-phosphate synthase, found in Paraburkholderia phymatum (strain DSM 17167 / CIP 108236 / LMG 21445 / STM815) (Burkholderia phymatum).